Here is a 231-residue protein sequence, read N- to C-terminus: Protein INCA1 (231 aa).

An interaction with CCNA1 and CCNA1/CDK2 complex; essential for CDK2 inhibitory activity region spans residues 75–99; it reads SLHPLEGLPPPEKLWRRKRKKLHLE. Residues 90-95 carry the Nuclear localization signal motif; it reads RRKRKK. Position 180 is a phosphothreonine (T180).

It belongs to the INCA family. As to quaternary structure, interacts with CCNA1. Identified in a complex with CCNA1 and CDK2. Interacts with ZNF16; the interaction inhibits INCA1 activity and induces the cell cycle process. Interacts with SPACA9. Interacts with CCNA2, CCNB1 and CCNE1. Interacts with the CCNA1/CDK2 complex. Interacts with ING5, DAZAP2, RNF26, USP15, SPOUT1, DPH7, TRIM26 and RAB5C. In terms of processing, phosphorylated when part of a complex with CCNA1 and CDK2.

It is found in the nucleus. It localises to the cytoplasm. Functionally, binds to CDK2-bound cyclins and inhibits the kinase activity of CDK2; binding to cyclins is critical for its function as CDK inhibitor. Inhibits cell growth and proliferation and may play a role in cell cycle control. Required for ING5-mediated regulation of S-phase progression, enhancement of Fas-induced apoptosis and inhibition of cell growth. The protein is Protein INCA1 (Inca1) of Mus musculus (Mouse).